Consider the following 360-residue polypeptide: Alpha-2-HS-glycoprotein (360 aa).

The first 15 residues, 1–15 (LVLLLSLAQLWSCHL), serve as a signal peptide directing secretion. A Cystatin fetuin-A-type 1 domain is found at 24–130 (YREHNCDDPE…QFTVLSAKCD (107 aa)). 6 disulfide bridges follow: Cys-29/Cys-351, Cys-86/Cys-97, Cys-111/Cys-129, Cys-143/Cys-146, Cys-205/Cys-216, and Cys-227/Cys-244. N-linked (GlcNAc...) asparagine glycosylation is present at Asn-96. Ser-131 is modified (phosphoserine). Thr-132 is subject to Phosphothreonine. Position 135 is a phosphoserine (Ser-135). Positions 141-252 (KLCPDCPLLT…TCTIFPAQPV (112 aa)) constitute a Cystatin fetuin-A-type 2 domain. An N-linked (GlcNAc...) asparagine glycan is attached at Asn-153. The tract at residues 260–285 (VAGAAAVEPAPAVDPASPVSPPDGQS) is disordered. Thr-312 carries the post-translational modification Phosphothreonine. Ser-318, Ser-321, and Ser-323 each carry phosphoserine.

This sequence belongs to the fetuin family. Phosphorylated by FAM20C in the extracellular medium. In terms of tissue distribution, bone marrow.

The protein resides in the secreted. Its function is as follows. A cell adhesion protein that binds immature cells of the granulocyte lineage. The polypeptide is Alpha-2-HS-glycoprotein (AHSG) (Oryctolagus cuniculus (Rabbit)).